Consider the following 147-residue polypeptide: Large ribosomal subunit protein uL15 (147 aa).

The interval 1–62 (MDLSNLRPAI…GQMPLQRRLP (62 aa)) is disordered. Gly residues-rich tracts occupy residues 21–31 (RGPGSGNGKTA) and 42–52 (SGGGVKPGFEG).

It belongs to the universal ribosomal protein uL15 family. In terms of assembly, part of the 50S ribosomal subunit.

In terms of biological role, binds to the 23S rRNA. The polypeptide is Large ribosomal subunit protein uL15 (Syntrophotalea carbinolica (strain DSM 2380 / NBRC 103641 / GraBd1) (Pelobacter carbinolicus)).